The following is a 532-amino-acid chain: UDP-glucuronosyltransferase 1A6 (532 aa).

An N-terminal signal peptide occupies residues 1 to 26 (MACLLRSFQRISAGVFFLALWGMVVG). 2 N-linked (GlcNAc...) asparagine glycosylation sites follow: asparagine 294 and asparagine 346. A helical membrane pass occupies residues 490-506 (VIGFLLAVVLTVAFITF).

This sequence belongs to the UDP-glycosyltransferase family. In terms of assembly, isoform 1 interacts with isoform 3/i2 suggesting that oligomerization is involved in negative regulation of transferase activity by isoform 3. Isoform 1 also interacts with respective i2 isoforms of UGT1A1, UGT1A3, UGT1A4, UGT1A7, UGT1A8, UGT1A9 and UGT1A10. In terms of tissue distribution, expressed in skin. Isoforms 1 and 3 are expressed in kidney and liver. Isoform 1 but not isoform 2 is expressed in colon, esophagus and small intestine.

It localises to the microsome. The protein resides in the endoplasmic reticulum membrane. It catalyses the reaction glucuronate acceptor + UDP-alpha-D-glucuronate = acceptor beta-D-glucuronoside + UDP + H(+). The enzyme catalyses (5Z,8Z,11Z,14Z)-eicosatetraenoate + UDP-alpha-D-glucuronate = O-[(5Z),(8Z),(11Z),(14Z)-eicosatetraenoyl]-beta-D-glucuronate + UDP. The catalysed reaction is 15-hydroxy-(5Z,8Z,11Z,13E)-eicosatetraenoate + UDP-alpha-D-glucuronate = 15-O-(beta-D-glucuronosyl)-(5Z,8Z,11Z,14Z)-eicosatetraenoate + UDP + H(+). It carries out the reaction (E)-ferulate + UDP-alpha-D-glucuronate = (E)-4-O-(beta-D-glucuronosyl)-ferulate + UDP + H(+). It catalyses the reaction (E)-ferulate + UDP-alpha-D-glucuronate = (E)-ferulic acid beta-D-glucuronate ester + UDP. Functionally, UDP-glucuronosyltransferase (UGT) that catalyzes phase II biotransformation reactions in which lipophilic substrates are conjugated with glucuronic acid to facilitate their inactivation and excretion from the body. Essential for the elimination and detoxification of drugs, xenobiotics and endogenous compounds. Involved in the glucuronidation of arachidonic acid (AA) and AA-derived eicosanoids including 15-HETE and 20-HETE. Conjugates small planar phenolic molecules such as 4-nitrophenol, 1-naphthol, and 4-methylumbelliferone. The bulky phenol 4-hydroxybiphenyl, androgens and estrogens are not substrates. 2-hydroxybiphenyl is an excellent substrate. Involved in the glucuronidation of the phytochemical ferulic acid at the phenolic or the carboxylic acid group. Its function is as follows. Isoform 3 lacks transferase activity but acts as a negative regulator of isoform 1. This chain is UDP-glucuronosyltransferase 1A6, found in Homo sapiens (Human).